The sequence spans 294 residues: uncharacterized protein (294 aa).

A disordered region spans residues 181 to 204; that stretch reads DEPFPTTKNHNNDKRETNDKDDQQ. The segment covering 190-204 has biased composition (basic and acidic residues); the sequence is HNNDKRETNDKDDQQ.

Belongs to the IIV-6 391R family.

This is an uncharacterized protein from Acheta domesticus (House cricket).